Consider the following 240-residue polypeptide: Ribonuclease 3 (240 aa).

An RNase III domain is found at 9–141 (VEEFQKKTGI…LLAAIYLDQG (133 aa)). Glu-54 lines the Mg(2+) pocket. Asp-58 is a catalytic residue. Mg(2+) contacts are provided by Asp-127 and Glu-130. Glu-130 is an active-site residue. In terms of domain architecture, DRBM spans 168–237 (DYKTALQEIV…ARIAYEKLLK (70 aa)).

This sequence belongs to the ribonuclease III family. Homodimer. Mg(2+) is required as a cofactor.

It localises to the cytoplasm. The enzyme catalyses Endonucleolytic cleavage to 5'-phosphomonoester.. Digests double-stranded RNA. Involved in the processing of primary rRNA transcript to yield the immediate precursors to the large and small rRNAs (23S and 16S). Processes some mRNAs, and tRNAs when they are encoded in the rRNA operon. Processes pre-crRNA and tracrRNA of type II CRISPR loci if present in the organism. The sequence is that of Ribonuclease 3 from Thermotoga sp. (strain RQ2).